Here is a 117-residue protein sequence, read N- to C-terminus: Large ribosomal subunit protein bL20c (117 aa).

This sequence belongs to the bacterial ribosomal protein bL20 family.

Its subcellular location is the plastid. It localises to the chloroplast. Binds directly to 23S ribosomal RNA and is necessary for the in vitro assembly process of the 50S ribosomal subunit. It is not involved in the protein synthesizing functions of that subunit. The protein is Large ribosomal subunit protein bL20c of Olimarabidopsis pumila (Dwarf rocket).